The chain runs to 263 residues: Metaxin-2 (263 aa).

Ser-2 carries the post-translational modification N-acetylserine.

The protein belongs to the metaxin family. As to quaternary structure, interacts with MTX1/metaxin-1. Associates with the mitochondrial contact site and cristae organizing system (MICOS) complex, composed of at least MICOS10/MIC10, CHCHD3/MIC19, CHCHD6/MIC25, APOOL/MIC27, IMMT/MIC60, APOO/MIC23/MIC26 and QIL1/MIC13. This complex was also known under the names MINOS or MitOS complex. The MICOS complex associates with mitochondrial outer membrane proteins SAMM50, MTX1 and MTX2 (together described as components of the mitochondrial outer membrane sorting assembly machinery (SAM) complex) and DNAJC11, mitochondrial inner membrane protein TMEM11 and with HSPA9. The MICOS and SAM complexes together with DNAJC11 are part of a large protein complex spanning both membranes termed the mitochondrial intermembrane space bridging (MIB) complex.

The protein localises to the mitochondrion outer membrane. Its subcellular location is the mitochondrion. Its function is as follows. Involved in transport of proteins into the mitochondrion. In Homo sapiens (Human), this protein is Metaxin-2 (MTX2).